We begin with the raw amino-acid sequence, 856 residues long: V-type proton ATPase subunit a (856 aa).

At 1–409 (MAPKQDTPFR…NAYGTATYQE (409 aa)) the chain is on the cytoplasmic side. A helical transmembrane segment spans residues 410 to 428 (VNPAIPVIVTFPFLFAVMF). At 429 to 430 (GD) the chain is on the vacuolar side. Residues 431-447 (FGHALIMLCAALAMIYW) traverse the membrane as a helical segment. Topologically, residues 448–460 (EKPLKKVTFELFA) are cytoplasmic. A helical transmembrane segment spans residues 461–490 (MVFYGRYIVLVMAVFSVYTGLIYNDVFSKS). The Vacuolar segment spans residues 491-544 (MTLFDSQWKWVVPENFKEGMTVKAVLREPNGYRYPFGLDWRWHGTENELLFINS). A helical membrane pass occupies residues 545–564 (YKMKMAIILGWAHMTYSLCF). The Cytoplasmic segment spans residues 565–582 (SYINARHFKRPIDIWGNF). Residues 583 to 603 (VPGMIFFQSIFGYLVLCIIYK) traverse the membrane as a helical segment. The Vacuolar segment spans residues 604–648 (WSVDWFGTGRQPPGLLNMLIYMFLQPGTLDGGVELYPGQATVQVI). A helical transmembrane segment spans residues 649–668 (LLLLAVIQVPILLFLKPFYL). At 669–738 (RWENNRARAK…EVMIHQVIHT (70 aa)) the chain is on the cytoplasmic side. A disordered region spans residues 689 to 710 (VSALDEDDEEDPSNGDDYEGAA). The segment covering 692-707 (LDEDDEEDPSNGDDYE) has biased composition (acidic residues). The helical transmembrane segment at 739–763 (IEFCLNSVSHTASYLRLWALSLAHQ) threads the bilayer. Over 764–784 (QLSAVLWSMTMAKALESKGLG) the chain is Vacuolar. Residues 785 to 823 (GAIFLVVAFAMFFVLSVIILIIMEGVSAMLHSLRLAWVE) traverse the membrane as a helical segment. The Cytoplasmic segment spans residues 824-856 (SFSKFAEFGGWPFTPFSFKQQLEESEELKEYIG).

Belongs to the V-ATPase 116 kDa subunit family. V-ATPase is a heteromultimeric enzyme composed of a peripheral catalytic V1 complex (components A to H) attached to an integral membrane V0 proton pore complex (components: a, c, c', c'', d, e, f and VOA1).

The protein resides in the vacuole membrane. Subunit of the V0 complex of vacuolar(H+)-ATPase (V-ATPase), a multisubunit enzyme composed of a peripheral complex (V1) that hydrolyzes ATP and a membrane integral complex (V0) that translocates protons. V-ATPase is responsible for acidifying and maintaining the pH of intracellular compartments. The polypeptide is V-type proton ATPase subunit a (vph-1) (Neurospora crassa (strain ATCC 24698 / 74-OR23-1A / CBS 708.71 / DSM 1257 / FGSC 987)).